The sequence spans 442 residues: tRNA modification GTPase MnmE (442 aa).

(6S)-5-formyl-5,6,7,8-tetrahydrofolate contacts are provided by Arg27, Glu84, and Lys124. The region spanning 221–366 is the TrmE-type G domain; the sequence is GLHVVIVGAP…LLDALQAFAE (146 aa). Residues 231–236, 250–256, and 275–278 contribute to the GTP site; these read NAGKSS, SKEAGTT, and DTAG. Mg(2+) is bound by residues Ser235 and Thr256. Lys442 serves as a coordination point for (6S)-5-formyl-5,6,7,8-tetrahydrofolate.

It belongs to the TRAFAC class TrmE-Era-EngA-EngB-Septin-like GTPase superfamily. TrmE GTPase family. In terms of assembly, homodimer. Heterotetramer of two MnmE and two MnmG subunits. K(+) serves as cofactor.

Its subcellular location is the cytoplasm. Its function is as follows. Exhibits a very high intrinsic GTPase hydrolysis rate. Involved in the addition of a carboxymethylaminomethyl (cmnm) group at the wobble position (U34) of certain tRNAs, forming tRNA-cmnm(5)s(2)U34. The chain is tRNA modification GTPase MnmE from Brucella canis (strain ATCC 23365 / NCTC 10854 / RM-666).